A 1167-amino-acid chain; its full sequence is Integrin alpha-10 (1167 aa).

The signal sequence occupies residues 1 to 22 (MELPFVTHLFLPLVFLTGLCSP). Residues 23–1122 (FNLDEHHPRL…VVQTRPILIS (1100 aa)) lie on the Extracellular side of the membrane. FG-GAP repeat units lie at residues 24 to 85 (NLDE…HNAP) and 95 to 154 (QLGN…PQGS). A disulfide bridge links C76 with C86. N-linked (GlcNAc...) asparagine glycans are attached at residues N98, N234, N336, and N364. A VWFA domain is found at 167–350 (DVVIVLDGSN…AALTDIVDAL (184 aa)). 5 FG-GAP repeats span residues 361 to 412 (HAEN…LFPP), 417 to 470 (EDEF…KDGA), 472 to 534 (RVAQ…SLLT), 535 to 593 (LQGT…GVRP), and 597 to 657 (QRIA…VTPQ). Ca(2+) is bound by residues D494, D496, D498, D502, D558, N560, D562, D566, D620, D622, D624, and D628. Disulfide bonds link C666-C675 and C681-C736. N-linked (GlcNAc...) asparagine glycosylation is found at N733 and N763. A disulfide bond links C789 and C795. N-linked (GlcNAc...) asparagine glycans are attached at residues N839, N921, N1011, N1018, and N1039. A helical membrane pass occupies residues 1123–1145 (LWILIGSVLGGLLLLALLVFCLW). Topologically, residues 1146 to 1167 (KLGFFAHKKIPEEEKREEKLEQ) are cytoplasmic.

It belongs to the integrin alpha chain family. As to quaternary structure, heterodimer of an alpha and a beta subunit. Alpha-10 associates with beta-1. In terms of tissue distribution, widely expressed with highest expression in muscle and heart. Found in articular cartilage.

It localises to the membrane. Integrin alpha-10/beta-1 is a receptor for collagen. This chain is Integrin alpha-10 (ITGA10), found in Homo sapiens (Human).